The chain runs to 313 residues: Porphobilinogen deaminase (313 aa).

The residue at position 242 (cysteine 242) is an S-(dipyrrolylmethanemethyl)cysteine.

This sequence belongs to the HMBS family. Monomer. Requires dipyrromethane as cofactor.

It catalyses the reaction 4 porphobilinogen + H2O = hydroxymethylbilane + 4 NH4(+). Its pathway is porphyrin-containing compound metabolism; protoporphyrin-IX biosynthesis; coproporphyrinogen-III from 5-aminolevulinate: step 2/4. Tetrapolymerization of the monopyrrole PBG into the hydroxymethylbilane pre-uroporphyrinogen in several discrete steps. In Pseudomonas fluorescens (strain SBW25), this protein is Porphobilinogen deaminase.